The sequence spans 331 residues: Pyruvate dehydrogenase E1 component subunit beta (331 aa).

Glu60 provides a ligand contact to thiamine diphosphate. The K(+) site is built by Leu113, Ala161, Ile162, Asp164, and Asn166.

In terms of assembly, heterodimer of an alpha and a beta chain. It depends on thiamine diphosphate as a cofactor.

The protein localises to the plastid. It is found in the chloroplast. It carries out the reaction N(6)-[(R)-lipoyl]-L-lysyl-[protein] + pyruvate + H(+) = N(6)-[(R)-S(8)-acetyldihydrolipoyl]-L-lysyl-[protein] + CO2. In terms of biological role, the pyruvate dehydrogenase complex catalyzes the overall conversion of pyruvate to acetyl-CoA and CO(2). It contains multiple copies of three enzymatic components: pyruvate dehydrogenase (E1), dihydrolipoamide acetyltransferase (E2) and lipoamide dehydrogenase (E3). The chain is Pyruvate dehydrogenase E1 component subunit beta (pdhB) from Porphyra purpurea (Red seaweed).